Here is a 165-residue protein sequence, read N- to C-terminus: (2E)-enoyl-[ACP] glycyltransferase (165 aa).

This sequence belongs to the FcoT family.

The enzyme catalyses a (3R)-3-[(carboxymethyl)amino]fatty acid + holo-[ACP] + H(+) = a (2E)-enoyl-[ACP] + glycine + H2O. The catalysed reaction is (3R)-3-[(carboxymethyl)amino]butanoate + holo-[ACP] + H(+) = (2E)-butenoyl-[ACP] + glycine + H2O. In terms of biological role, involved in the biosynthesis of a unique class of isonitrile lipopeptides (INLPs). Catalyzes a Michael addition of glycine to the beta-position of an alpha,beta-unsaturated fatty acyl-[ACP], producing a (3R)-3-[(carboxymethyl)amino]fatty acid. Acts on the (2E)-butenoyl moiety loaded on the acyl-carrier protein ScoB, forming the product (3R)-3-[(carboxymethyl)amino]butanoate released from ScoB. In Streptomyces coeruleorubidus, this protein is (2E)-enoyl-[ACP] glycyltransferase.